We begin with the raw amino-acid sequence, 257 residues long: tRNA dimethylallyltransferase (257 aa).

15–22 (GPTASGKS) serves as a coordination point for ATP. 17 to 22 (TASGKS) contacts substrate.

Belongs to the IPP transferase family. Monomer. It depends on Mg(2+) as a cofactor.

It catalyses the reaction adenosine(37) in tRNA + dimethylallyl diphosphate = N(6)-dimethylallyladenosine(37) in tRNA + diphosphate. In terms of biological role, catalyzes the transfer of a dimethylallyl group onto the adenine at position 37 in tRNAs that read codons beginning with uridine, leading to the formation of N6-(dimethylallyl)adenosine (i(6)A). This is tRNA dimethylallyltransferase from Oenococcus oeni (strain ATCC BAA-331 / PSU-1).